We begin with the raw amino-acid sequence, 273 residues long: Dermonecrotic toxin LdSicTox-alphaIB3aiv (273 aa).

Residue His-5 is part of the active site. 2 residues coordinate Mg(2+): Glu-25 and Asp-27. His-41 acts as the Nucleophile in catalysis. 2 disulfides stabilise this stretch: Cys-45/Cys-51 and Cys-47/Cys-190. A Mg(2+)-binding site is contributed by Asp-85.

Belongs to the arthropod phospholipase D family. Class II subfamily. The cofactor is Mg(2+). Expressed by the venom gland.

The protein resides in the secreted. The catalysed reaction is an N-(acyl)-sphingosylphosphocholine = an N-(acyl)-sphingosyl-1,3-cyclic phosphate + choline. The enzyme catalyses an N-(acyl)-sphingosylphosphoethanolamine = an N-(acyl)-sphingosyl-1,3-cyclic phosphate + ethanolamine. It catalyses the reaction a 1-acyl-sn-glycero-3-phosphocholine = a 1-acyl-sn-glycero-2,3-cyclic phosphate + choline. It carries out the reaction a 1-acyl-sn-glycero-3-phosphoethanolamine = a 1-acyl-sn-glycero-2,3-cyclic phosphate + ethanolamine. Functionally, dermonecrotic toxins cleave the phosphodiester linkage between the phosphate and headgroup of certain phospholipids (sphingolipid and lysolipid substrates), forming an alcohol (often choline) and a cyclic phosphate. This toxin acts on sphingomyelin (SM). It may also act on ceramide phosphoethanolamine (CPE), lysophosphatidylcholine (LPC) and lysophosphatidylethanolamine (LPE), but not on lysophosphatidylserine (LPS), and lysophosphatidylglycerol (LPG). It acts by transphosphatidylation, releasing exclusively cyclic phosphate products as second products. Induces dermonecrosis, hemolysis, increased vascular permeability, edema, inflammatory response, and platelet aggregation. The protein is Dermonecrotic toxin LdSicTox-alphaIB3aiv of Loxosceles deserta (Desert recluse spider).